The sequence spans 273 residues: Undecaprenyl-diphosphatase (273 aa).

Transmembrane regions (helical) follow at residues 4–24, 48–68, 89–109, 116–136, 152–172, 193–213, 222–242, and 252–272; these read MELW…FAPV, AANT…VVVF, LNLI…VLFE, LFST…MIAA, ITYK…WPGF, ADFT…LSLL, ADIP…LLAI, and IRLV…YFLY.

Belongs to the UppP family.

It is found in the cell membrane. The catalysed reaction is di-trans,octa-cis-undecaprenyl diphosphate + H2O = di-trans,octa-cis-undecaprenyl phosphate + phosphate + H(+). In terms of biological role, catalyzes the dephosphorylation of undecaprenyl diphosphate (UPP). Confers resistance to bacitracin. This Geobacillus kaustophilus (strain HTA426) protein is Undecaprenyl-diphosphatase.